The following is a 38-amino-acid chain: Photosystem II reaction center protein L (38 aa).

A helical membrane pass occupies residues 17–37; that stretch reads SLYWGLLLIFVLAVLFSSYFF.

The protein belongs to the PsbL family. PSII is composed of 1 copy each of membrane proteins PsbA, PsbB, PsbC, PsbD, PsbE, PsbF, PsbH, PsbI, PsbJ, PsbK, PsbL, PsbM, PsbT, PsbX, PsbY, PsbZ, Psb30/Ycf12, at least 3 peripheral proteins of the oxygen-evolving complex and a large number of cofactors. It forms dimeric complexes.

The protein resides in the plastid. The protein localises to the chloroplast thylakoid membrane. In terms of biological role, one of the components of the core complex of photosystem II (PSII). PSII is a light-driven water:plastoquinone oxidoreductase that uses light energy to abstract electrons from H(2)O, generating O(2) and a proton gradient subsequently used for ATP formation. It consists of a core antenna complex that captures photons, and an electron transfer chain that converts photonic excitation into a charge separation. This subunit is found at the monomer-monomer interface and is required for correct PSII assembly and/or dimerization. The chain is Photosystem II reaction center protein L from Thalassiosira pseudonana (Marine diatom).